Here is a 302-residue protein sequence, read N- to C-terminus: Thioredoxin-like protein CDSP32, chloroplastic (302 aa).

The N-terminal 56 residues, 1 to 56, are a transit peptide targeting the chloroplast; sequence MATVANFLAKPISTVVPRPSSAVASTSSFVFFNHKTNPLFRRKNLPKRLFSAVKIK. One can recognise a Thioredoxin domain in the interval 163-298; it reads HEEEGIEPDQ…IGEILRYSGV (136 aa). Catalysis depends on nucleophile residues cysteine 219 and cysteine 222. Cysteines 219 and 222 form a disulfide.

This sequence belongs to the thioredoxin family. As to quaternary structure, interacts with the plastidial peroxiredoxin BAS1.

The protein resides in the plastid. It localises to the chloroplast stroma. Probable thiol-disulfide oxidoreductase involved in resistance to oxidative stress. May participate in the reduction of alkyl hydroperoxides derived from oxidative stress by acting as a physiological electron donor to the BAS1 peroxiredoxin. May regenerate methionine sulfoxide reductase B1 (MSRB1) activity through sulfenic acid reduction. This is Thioredoxin-like protein CDSP32, chloroplastic (CDSP32) from Arabidopsis thaliana (Mouse-ear cress).